A 927-amino-acid polypeptide reads, in one-letter code: Probable UDP-N-acetylglucosamine--peptide N-acetylglucosaminyltransferase SPINDLY (927 aa).

Residues 1–31 (MGRPGMDSSEGRESNGVVPERNGGAVPAKQQ) are disordered. 11 TPR repeats span residues 34–67 (GKDT…DEAN), 68–101 (VEAL…DPGN), 102–135 (ACAL…DPSY), 143–176 (AIVL…DSHY), 177–210 (APAY…RPLY), 211–244 (AEAY…SPNF), 252–285 (AIAL…NWHY), 286–319 (ADAM…NPRC), 320–353 (AEAC…KPNF), 355–387 (QSLN…NSTY), and 388–421 (AEAY…DPDS). A catalytic region region spans residues 422–927 (RNAGQNRLLA…KVEANGHISR (506 aa)).

Belongs to the glycosyltransferase 41 family. O-GlcNAc transferase subfamily.

The protein localises to the nucleus. The catalysed reaction is L-seryl-[protein] + UDP-N-acetyl-alpha-D-glucosamine = 3-O-(N-acetyl-beta-D-glucosaminyl)-L-seryl-[protein] + UDP + H(+). The enzyme catalyses L-threonyl-[protein] + UDP-N-acetyl-alpha-D-glucosamine = 3-O-(N-acetyl-beta-D-glucosaminyl)-L-threonyl-[protein] + UDP + H(+). The protein operates within protein modification; protein glycosylation. Its function is as follows. Probable O-linked N-acetylglucosamine transferase (OGT) involved in various processes such as gibberellin (GA) signaling pathway. OGTs catalyze the addition of nucleotide-activated sugars directly onto the polypeptide through O-glycosidic linkage with the hydroxyl of serine or threonine. Probably acts by adding O-linked sugars to yet unknown proteins. The protein is Probable UDP-N-acetylglucosamine--peptide N-acetylglucosaminyltransferase SPINDLY (SPY) of Oryza sativa subsp. japonica (Rice).